Reading from the N-terminus, the 1374-residue chain is Sterol 3-beta-glucosyltransferase (1374 aa).

The span at 1–14 shows a compositional bias: basic and acidic residues; sequence MRPLRDDAKRRADR. 3 disordered regions span residues 1–60, 83–190, and 206–227; these read MRPL…RDGN, ARFD…PRAA, and TSAT…QPQS. The span at 16–28 shows a compositional bias: polar residues; the sequence is LSASMKPTSSNRP. Residues 29–41 show a composition bias toward basic and acidic residues; the sequence is FSDRVPDRFKDGD. Residues 101–112 are compositionally biased toward polar residues; it reads VEQTTGKASSRT. The segment covering 125–138 has biased composition (basic and acidic residues); sequence KRSEPSKLVLEERG. Residues 234 to 283 enclose the GRAM 1 domain; the sequence is MRLMKMFEFAKPEKVLVEYACSLLQSMLLQGYMYVTEGHICFYAYLPKKS. The PH domain occupies 285-382; sequence VAIKSGYLSK…WVKALQQVIF (98 aa). Residues 458 to 538 form a disordered region; that stretch reads ATKEAQDQHD…SMTDTTESAS (81 aa). Basic and acidic residues-rich tracts occupy residues 461–473 and 490–499; these read EAQD…HQPE and SDQRREDSPR. Positions 503-538 are enriched in polar residues; it reads SSVGNENQGSADSFAEQGTGSSPIIQSMTDTTESAS. Positions 704–770 constitute a GRAM 2 domain; the sequence is DRFRAHFALP…KDIENVEKEK (67 aa). UDP-alpha-D-glucose-binding residues include S893, R894, D896, A1196, H1198, H1211, G1215, T1216, D1235, and Q1236. Over residues 1314–1325 the composition is skewed to polar residues; that stretch reads ASSTPFSPTPTA. The disordered stretch occupies residues 1314–1338; the sequence is ASSTPFSPTPTAKASPDGGDDDLDD.

The protein belongs to the glycosyltransferase 28 family.

The protein resides in the cytoplasm. It localises to the preautophagosomal structure membrane. It catalyses the reaction a sterol + UDP-alpha-D-glucose = a sterol 3-beta-D-glucoside + UDP + H(+). It carries out the reaction ergosterol + UDP-alpha-D-glucose = ergosteryl 3-beta-D-glucoside + UDP + H(+). Sterol glycosyltransferase responsible for the glycosylation of ergosterol to form ergosterol-glucoside. This Penicillium rubens (strain ATCC 28089 / DSM 1075 / NRRL 1951 / Wisconsin 54-1255) (Penicillium chrysogenum) protein is Sterol 3-beta-glucosyltransferase.